A 286-amino-acid chain; its full sequence is CDP-diacylglycerol--serine O-phosphatidyltransferase (286 aa).

Transmembrane regions (helical) follow at residues 15–35 (ILPS…IKFA), 95–115 (MLSK…CVVL), 135–155 (EFFV…LLAL), 167–187 (VWFL…GIPM), and 207–227 (LAIC…VIII).

This sequence belongs to the CDP-alcohol phosphatidyltransferase class-I family.

It localises to the cell membrane. It catalyses the reaction a CDP-1,2-diacyl-sn-glycerol + L-serine = a 1,2-diacyl-sn-glycero-3-phospho-L-serine + CMP + H(+). The sequence is that of CDP-diacylglycerol--serine O-phosphatidyltransferase (pssA) from Mycobacterium bovis (strain ATCC BAA-935 / AF2122/97).